A 735-amino-acid chain; its full sequence is Photosystem I P700 chlorophyll a apoprotein A2 (735 aa).

8 helical membrane-spanning segments follow: residues 46–69, 135–158, 176–200, 274–292, 329–352, 368–394, 416–438, and 521–539; these read IFAS…FYVS, LSTA…IHGY, LNHH…HVAI, IAHH…GHMY, LNLQ…QHMY, AALY…IFLV, VIIS…LYVH, and FLVH…LILV. [4Fe-4S] cluster-binding residues include C563 and C572. Transmembrane regions (helical) follow at residues 579–600 and 647–669; these read AFYL…YWHW and LSVW…MFLI. Residues H658, M666, and Y674 each contribute to the chlorophyll a site. W675 is a binding site for phylloquinone. The chain crosses the membrane as a helical span at residues 708 to 728; it reads FVGLIHFTVGYILTYAAFLIA.

Belongs to the PsaA/PsaB family. In terms of assembly, the PsaA/B heterodimer binds the P700 chlorophyll special pair and subsequent electron acceptors. PSI consists of a core antenna complex that captures photons, and an electron transfer chain that converts photonic excitation into a charge separation. The eukaryotic PSI reaction center is composed of at least 11 subunits. The cofactor is P700 is a chlorophyll a/chlorophyll a' dimer, A0 is one or more chlorophyll a, A1 is one or both phylloquinones and FX is a shared 4Fe-4S iron-sulfur center..

The protein localises to the plastid. It localises to the chloroplast thylakoid membrane. The catalysed reaction is reduced [plastocyanin] + hnu + oxidized [2Fe-2S]-[ferredoxin] = oxidized [plastocyanin] + reduced [2Fe-2S]-[ferredoxin]. Its function is as follows. PsaA and PsaB bind P700, the primary electron donor of photosystem I (PSI), as well as the electron acceptors A0, A1 and FX. PSI is a plastocyanin/cytochrome c6-ferredoxin oxidoreductase, converting photonic excitation into a charge separation, which transfers an electron from the donor P700 chlorophyll pair to the spectroscopically characterized acceptors A0, A1, FX, FA and FB in turn. Oxidized P700 is reduced on the lumenal side of the thylakoid membrane by plastocyanin or cytochrome c6. In Bigelowiella natans (Pedinomonas minutissima), this protein is Photosystem I P700 chlorophyll a apoprotein A2.